The following is a 266-amino-acid chain: tRNA pseudouridine synthase A (266 aa).

Catalysis depends on aspartate 52, which acts as the Nucleophile. Tyrosine 113 provides a ligand contact to substrate.

Belongs to the tRNA pseudouridine synthase TruA family. As to quaternary structure, homodimer.

It carries out the reaction uridine(38/39/40) in tRNA = pseudouridine(38/39/40) in tRNA. Formation of pseudouridine at positions 38, 39 and 40 in the anticodon stem and loop of transfer RNAs. This Agrobacterium fabrum (strain C58 / ATCC 33970) (Agrobacterium tumefaciens (strain C58)) protein is tRNA pseudouridine synthase A.